The chain runs to 400 residues: MVMIKMSDVDLFNKRILIRADLNVPIRNGIITSARRIHASLPTIQLALSRSNQVMVTSHLGRPVEGEYDSQFSLQPVVDYFQKNLSAKIGGVRLVKDYLDGINWISNELLILENVRFNKGEKTDDEVLAKKYASLCDVFVMDAFGSAHRIQSSTHNVSKFVKVACSGLLLEQEIAALHKALSNPVRPMVAIVGGSKVSSKLMVLESLSKVVDYLIVGGGIANTFLAAQGQNVGKSLYEAELISTAKSLLKDCNIPIPTDVRVSSEFSETAQSIMKNVTEIKDDEQILDLGDNSIINILNILNNAKTILWNGPVGVFEFPNFRKGTEMVSNAIANSNAFSIAGGGDTLMAIDLFGIANQISYVSTGGGAFLEFIEGKTLPSIEVLEEHKRMRNGNYSDINY.

Substrate contacts are provided by residues 21–23 (DLN), Arg36, 59–62 (HLGR), Arg116, and Arg149. ATP is bound by residues Lys200, Glu317, and 343–346 (GGDT).

The protein belongs to the phosphoglycerate kinase family. In terms of assembly, monomer.

It is found in the cytoplasm. It catalyses the reaction (2R)-3-phosphoglycerate + ATP = (2R)-3-phospho-glyceroyl phosphate + ADP. The protein operates within carbohydrate degradation; glycolysis; pyruvate from D-glyceraldehyde 3-phosphate: step 2/5. This is Phosphoglycerate kinase from Blochmanniella floridana.